The primary structure comprises 708 residues: Leukotoxin translocation ATP-binding protein LktB (708 aa).

One can recognise a Peptidase C39 domain in the interval 1–126 (MEVNHQSNDL…SCYQGKIILV (126 aa)). The 283-residue stretch at 155-437 (FLETLLVSIF…LAQLWQDFTQ (283 aa)) folds into the ABC transmembrane type-1 domain. 5 helical membrane-spanning segments follow: residues 159–179 (LLVS…FQVV), 192–212 (LNII…LSGL), 270–290 (ALTS…MWYY), 296–316 (LVIL…SPIL), and 389–409 (VMVI…LSIG). Positions 469-704 (IAFKNIRFRY…NNGLYSYLHQ (236 aa)) constitute an ABC transporter domain. ATP is bound at residue 503–510 (GRSGSGKS).

Belongs to the ABC transporter superfamily. Protein-1 exporter (TC 3.A.1.109) family. As to quaternary structure, homodimer.

The protein resides in the cell inner membrane. The enzyme catalyses ATP + H2O + proteinSide 1 = ADP + phosphate + proteinSide 2.. Its function is as follows. Part of the ABC transporter complex LktBD involved in leukotoxin export. Transmembrane domains (TMD) form a pore in the inner membrane and the ATP-binding domain (NBD) is responsible for energy generation. The protein is Leukotoxin translocation ATP-binding protein LktB (lktB) of Pasteurella haemolytica-like sp. (strain 5943B).